The following is a 258-amino-acid chain: Type III pantothenate kinase 1 (258 aa).

6 to 13 (DMGNSHIH) contributes to the ATP binding site. Substrate is bound at residue 107 to 110 (GADR). Aspartate 109 functions as the Proton acceptor in the catalytic mechanism. Residue aspartate 130 participates in K(+) binding. Threonine 133 is an ATP binding site. Threonine 185 provides a ligand contact to substrate.

Belongs to the type III pantothenate kinase family. Homodimer. NH4(+) serves as cofactor. It depends on K(+) as a cofactor.

It is found in the cytoplasm. It carries out the reaction (R)-pantothenate + ATP = (R)-4'-phosphopantothenate + ADP + H(+). Its pathway is cofactor biosynthesis; coenzyme A biosynthesis; CoA from (R)-pantothenate: step 1/5. Catalyzes the phosphorylation of pantothenate (Pan), the first step in CoA biosynthesis. The chain is Type III pantothenate kinase 1 from Francisella tularensis subsp. tularensis (strain FSC 198).